The chain runs to 239 residues: Putative GEM-like protein 3 (239 aa).

The tract at residues 29–68 (HWNPELVSESPAPDEKALSSSSAARSNPYVARAPTETSDA) is disordered. The GRAM domain maps to 128-191 (KIFRQTFETV…HQLKSVNPSI (64 aa)).

Belongs to the GEM family.

The polypeptide is Putative GEM-like protein 3 (Arabidopsis thaliana (Mouse-ear cress)).